Consider the following 203-residue polypeptide: Phospho-2-dehydro-3-deoxyheptonate aldolase (203 aa).

Over residues 1–10 (MIDRLVRDSR) the composition is skewed to basic and acidic residues. The interval 1–28 (MIDRLVRDSRGPVTERNPPHMSLSAGPA) is disordered.

It belongs to the class-I DAHP synthase family.

The catalysed reaction is D-erythrose 4-phosphate + phosphoenolpyruvate + H2O = 7-phospho-2-dehydro-3-deoxy-D-arabino-heptonate + phosphate. The protein operates within metabolic intermediate biosynthesis; chorismate biosynthesis; chorismate from D-erythrose 4-phosphate and phosphoenolpyruvate: step 1/7. Functionally, stereospecific condensation of phosphoenolpyruvate (PEP) and D-erythrose-4-phosphate (E4P) giving rise to 3-deoxy-D-arabino-heptulosonate-7-phosphate (DAHP). In Amycolatopsis methanolica, this protein is Phospho-2-dehydro-3-deoxyheptonate aldolase (aroA).